A 398-amino-acid polypeptide reads, in one-letter code: Tyrosine--tRNA ligase (398 aa).

A 'HIGH' region motif is present at residues 42-51 (PTAPDLHLGH). The 'KMSKS' region motif lies at 226–230 (KMSKS). Lysine 229 provides a ligand contact to ATP. In terms of domain architecture, S4 RNA-binding spans 341-397 (AFLEAAGLVKSRGEAKRLIKEGALSVDGVRCDDANSPLASGEYVIKLGKKRFLRLTV).

It belongs to the class-I aminoacyl-tRNA synthetase family. TyrS type 2 subfamily. As to quaternary structure, homodimer.

Its subcellular location is the cytoplasm. The catalysed reaction is tRNA(Tyr) + L-tyrosine + ATP = L-tyrosyl-tRNA(Tyr) + AMP + diphosphate + H(+). Catalyzes the attachment of tyrosine to tRNA(Tyr) in a two-step reaction: tyrosine is first activated by ATP to form Tyr-AMP and then transferred to the acceptor end of tRNA(Tyr). This is Tyrosine--tRNA ligase from Nitratidesulfovibrio vulgaris (strain ATCC 29579 / DSM 644 / CCUG 34227 / NCIMB 8303 / VKM B-1760 / Hildenborough) (Desulfovibrio vulgaris).